Reading from the N-terminus, the 193-residue chain is NADH-quinone oxidoreductase subunit B (193 aa).

Residues 1-11 (MGLTGTNTTLV) are compositionally biased toward polar residues. The segment at 1–23 (MGLTGTNTTLVAPQPKGILDPRT) is disordered. The [4Fe-4S] cluster site is built by Cys-72, Cys-73, Cys-137, and Cys-167.

It belongs to the complex I 20 kDa subunit family. As to quaternary structure, NDH-1 is composed of 14 different subunits. Subunits NuoB, C, D, E, F, and G constitute the peripheral sector of the complex. [4Fe-4S] cluster is required as a cofactor.

The protein resides in the cell inner membrane. The enzyme catalyses a quinone + NADH + 5 H(+)(in) = a quinol + NAD(+) + 4 H(+)(out). In terms of biological role, NDH-1 shuttles electrons from NADH, via FMN and iron-sulfur (Fe-S) centers, to quinones in the respiratory chain. Couples the redox reaction to proton translocation (for every two electrons transferred, four hydrogen ions are translocated across the cytoplasmic membrane), and thus conserves the redox energy in a proton gradient. The polypeptide is NADH-quinone oxidoreductase subunit B (Brucella canis (strain ATCC 23365 / NCTC 10854 / RM-666)).